Consider the following 262-residue polypeptide: Phosphatidylglycerol--prolipoprotein diacylglyceryl transferase (262 aa).

A run of 4 helical transmembrane segments spans residues 9-29, 41-61, 80-100, and 109-129; these read LGPL…ILAV, IIPD…ILGA, IFAI…GALV, and LINT…AQSL. Arginine 131 contacts a 1,2-diacyl-sn-glycero-3-phospho-(1'-sn-glycerol). 3 consecutive transmembrane segments (helical) span residues 167-187, 197-217, and 227-247; these read QPTF…ILIF, GHIT…IEGM, and LRVS…IVIY.

The protein belongs to the Lgt family.

It is found in the cell membrane. It carries out the reaction L-cysteinyl-[prolipoprotein] + a 1,2-diacyl-sn-glycero-3-phospho-(1'-sn-glycerol) = an S-1,2-diacyl-sn-glyceryl-L-cysteinyl-[prolipoprotein] + sn-glycerol 1-phosphate + H(+). Its pathway is protein modification; lipoprotein biosynthesis (diacylglyceryl transfer). Its function is as follows. Catalyzes the transfer of the diacylglyceryl group from phosphatidylglycerol to the sulfhydryl group of the N-terminal cysteine of a prolipoprotein, the first step in the formation of mature lipoproteins. This chain is Phosphatidylglycerol--prolipoprotein diacylglyceryl transferase, found in Streptococcus pneumoniae (strain JJA).